Consider the following 85-residue polypeptide: Probable Thioredoxin (85 aa).

The Glutaredoxin domain maps to 2–85 (VVKIEVFTSP…LFEAISDEIE (84 aa)). An intrachain disulfide couples Cys-13 to Cys-16.

Belongs to the glutaredoxin family.

The protein localises to the cytoplasm. In terms of biological role, does not function as a glutathione-disulfide oxidoreductase in the presence of glutathione and glutathione reductase. May be a component of a ribonucleotide-reducing system distinct from the previously described systems utilizing thioredoxin or glutaredoxin. In Methanothermobacter marburgensis (strain ATCC BAA-927 / DSM 2133 / JCM 14651 / NBRC 100331 / OCM 82 / Marburg) (Methanobacterium thermoautotrophicum), this protein is Probable Thioredoxin.